The following is a 179-amino-acid chain: Inner membrane-spanning protein YciB (179 aa).

Helical transmembrane passes span 22 to 42 (IYAATAALIVATAIVLIYSWV), 50 to 70 (MALITFVLVVVFGGLTLFFHN), 76 to 96 (WKVTVIYALFAGALLVSQWVM), 121 to 141 (LAWAVFFILCGLANIYIAFWL), and 149 to 169 (FKVFGLTALTLIFTLLSGVYI).

It belongs to the YciB family.

The protein localises to the cell inner membrane. Functionally, plays a role in cell envelope biogenesis, maintenance of cell envelope integrity and membrane homeostasis. This chain is Inner membrane-spanning protein YciB, found in Escherichia fergusonii (strain ATCC 35469 / DSM 13698 / CCUG 18766 / IAM 14443 / JCM 21226 / LMG 7866 / NBRC 102419 / NCTC 12128 / CDC 0568-73).